Consider the following 303-residue polypeptide: MRIIFMGSPEFSVVALSSILNNTEHKIVGVYTRVPKPAGRGKVLTKTPIHTVAEMHGLTVYTPKSLKRIEEQDRIKELNPDVIVVVAYGLIIPKEVLSIPKYGCINIHPSLLPRWRGAAPIHYAILHGDSQTGVTIMQMNEGWDEGDILLQKKLSIDEQDNIETLSSKLSNLGGAMLVEVLNNIDNLVPVAQNEDNATYTNKIEDFHIDINETAEVACRRIRALYPRAFVFFNGKRLRILQASYYYDDNISSLKPSSILNSGMHIKCKGNTILVPLVVQMEGKTLCSIKDFVCGYNVKDYSIT.

A (6S)-5,6,7,8-tetrahydrofolate-binding site is contributed by 110–113 (SLLP).

This sequence belongs to the Fmt family.

The catalysed reaction is L-methionyl-tRNA(fMet) + (6R)-10-formyltetrahydrofolate = N-formyl-L-methionyl-tRNA(fMet) + (6S)-5,6,7,8-tetrahydrofolate + H(+). Attaches a formyl group to the free amino group of methionyl-tRNA(fMet). The formyl group appears to play a dual role in the initiator identity of N-formylmethionyl-tRNA by promoting its recognition by IF2 and preventing the misappropriation of this tRNA by the elongation apparatus. The chain is Methionyl-tRNA formyltransferase from Ehrlichia ruminantium (strain Welgevonden).